The following is a 475-amino-acid chain: Ras-GEF domain-containing family member 1A (475 aa).

The 132-residue stretch at 33-164 folds into the N-terminal Ras-GEF domain; that stretch reads QDGSLVSGSL…SISQMTQNVL (132 aa). The Ras-GEF domain maps to 208-455; sequence DPLILAQQLT…FLASFENEGP (248 aa).

Guanine nucleotide exchange factor (GEF) with specificity for rap2a and other Ras family proteins (in vitro). Plays a role in cell migration. The chain is Ras-GEF domain-containing family member 1A (rasgef1a) from Xenopus tropicalis (Western clawed frog).